The primary structure comprises 276 residues: Aldo-keto reductase Mkms_1985 (276 aa).

The Proton donor role is filled by Tyr-50. NADPH is bound by residues Leu-190, Ile-228, Lys-230, Ser-231, Val-232, Arg-236, Ser-239, and Asn-240. Residues 257–276 are disordered; that stretch reads SSLEDGSRLGPDPKTFNFTG.

It belongs to the aldo/keto reductase family.

In Mycobacterium sp. (strain KMS), this protein is Aldo-keto reductase Mkms_1985.